Reading from the N-terminus, the 144-residue chain is Transcriptional regulator MraZ (144 aa).

SpoVT-AbrB domains are found at residues 5–47 (EYDH…TLDE) and 76–119 (AVEV…DRET).

Belongs to the MraZ family. As to quaternary structure, forms oligomers.

The protein resides in the cytoplasm. It is found in the nucleoid. The sequence is that of Transcriptional regulator MraZ from Staphylococcus aureus.